A 355-amino-acid chain; its full sequence is Hyaluronan and proteoglycan link protein 1 (355 aa).

The propeptide occupies 1–9 (MTSLLFLVL). 2 N-linked (GlcNAc...) asparagine glycosylation sites follow: asparagine 21 and asparagine 56. The 119-residue stretch at 38–156 (PRLLVVAEQA…EDDTAVVALN (119 aa)) folds into the Ig-like V-type domain. Intrachain disulfides connect cysteine 61-cysteine 140, cysteine 182-cysteine 253, cysteine 206-cysteine 227, cysteine 280-cysteine 350, and cysteine 305-cysteine 326. Link domains follow at residues 160–255 (VVFP…FCFT) and 260–352 (GRFY…YCFR).

Belongs to the HAPLN family.

It is found in the secreted. The protein localises to the extracellular space. It localises to the extracellular matrix. In terms of biological role, stabilizes the aggregates of proteoglycan monomers with hyaluronic acid in the extracellular cartilage matrix. In Gallus gallus (Chicken), this protein is Hyaluronan and proteoglycan link protein 1 (HAPLN1).